Reading from the N-terminus, the 164-residue chain is Putative 4-hydroxy-4-methyl-2-oxoglutarate aldolase (164 aa).

Substrate contacts are provided by residues 80–83 (GGNL) and Arg102. Asp103 contacts a divalent metal cation.

It belongs to the class II aldolase/RraA-like family. In terms of assembly, homotrimer. A divalent metal cation is required as a cofactor.

The enzyme catalyses 4-hydroxy-4-methyl-2-oxoglutarate = 2 pyruvate. It carries out the reaction oxaloacetate + H(+) = pyruvate + CO2. Functionally, catalyzes the aldol cleavage of 4-hydroxy-4-methyl-2-oxoglutarate (HMG) into 2 molecules of pyruvate. Also contains a secondary oxaloacetate (OAA) decarboxylase activity due to the common pyruvate enolate transition state formed following C-C bond cleavage in the retro-aldol and decarboxylation reactions. This Burkholderia multivorans (strain ATCC 17616 / 249) protein is Putative 4-hydroxy-4-methyl-2-oxoglutarate aldolase.